The sequence spans 215 residues: ATP-dependent dethiobiotin synthetase BioD (215 aa).

ATP is bound at residue 13-18; it reads DIGKTV. Thr17 contacts Mg(2+). Lys38 is an active-site residue. Substrate is bound at residue Thr42. Residues Asp50, 115–118, and 175–176 each bind ATP; these read EGAG and NH. The Mg(2+) site is built by Asp50 and Glu115.

It belongs to the dethiobiotin synthetase family. Homodimer. It depends on Mg(2+) as a cofactor.

It is found in the cytoplasm. It catalyses the reaction (7R,8S)-7,8-diammoniononanoate + CO2 + ATP = (4R,5S)-dethiobiotin + ADP + phosphate + 3 H(+). Its pathway is cofactor biosynthesis; biotin biosynthesis; biotin from 7,8-diaminononanoate: step 1/2. Functionally, catalyzes a mechanistically unusual reaction, the ATP-dependent insertion of CO2 between the N7 and N8 nitrogen atoms of 7,8-diaminopelargonic acid (DAPA, also called 7,8-diammoniononanoate) to form a ureido ring. This is ATP-dependent dethiobiotin synthetase BioD from Neisseria gonorrhoeae (strain NCCP11945).